Here is a 414-residue protein sequence, read N- to C-terminus: Esterase FrsA (414 aa).

It belongs to the FrsA family.

It catalyses the reaction a carboxylic ester + H2O = an alcohol + a carboxylate + H(+). In terms of biological role, catalyzes the hydrolysis of esters. This Shigella boydii serotype 18 (strain CDC 3083-94 / BS512) protein is Esterase FrsA.